The following is a 37-amino-acid chain: Large ribosomal subunit protein bL36c (37 aa).

This sequence belongs to the bacterial ribosomal protein bL36 family.

The protein localises to the plastid. Its subcellular location is the chloroplast. The polypeptide is Large ribosomal subunit protein bL36c (Nicotiana tomentosiformis (Tobacco)).